We begin with the raw amino-acid sequence, 670 residues long: DNA ligase (670 aa).

Residues D32–D36, S81–L82, and E114 contribute to the NAD(+) site. Residue K116 is the N6-AMP-lysine intermediate of the active site. R137, E174, K291, and K315 together coordinate NAD(+). Residues C409, C412, C427, and C433 each contribute to the Zn(2+) site. One can recognise a BRCT domain in the interval A592 to R670.

This sequence belongs to the NAD-dependent DNA ligase family. LigA subfamily. The cofactor is Mg(2+). Requires Mn(2+) as cofactor.

It catalyses the reaction NAD(+) + (deoxyribonucleotide)n-3'-hydroxyl + 5'-phospho-(deoxyribonucleotide)m = (deoxyribonucleotide)n+m + AMP + beta-nicotinamide D-nucleotide.. Functionally, DNA ligase that catalyzes the formation of phosphodiester linkages between 5'-phosphoryl and 3'-hydroxyl groups in double-stranded DNA using NAD as a coenzyme and as the energy source for the reaction. It is essential for DNA replication and repair of damaged DNA. This is DNA ligase from Haemophilus influenzae (strain ATCC 51907 / DSM 11121 / KW20 / Rd).